The primary structure comprises 530 residues: Ubiquitin carboxyl-terminal hydrolase 17-like protein 20 (530 aa).

The USP domain occupies 80 to 375 (AGLQNMGNTC…QAYVLFYIQK (296 aa)). Residue cysteine 89 is the Nucleophile of the active site. The active-site Proton acceptor is the histidine 334. Composition is skewed to basic and acidic residues over residues 382-392 (SESVSRGREPR) and 398-413 (DTDR…RDHP). Disordered regions lie at residues 382-413 (SESV…RDHP) and 509-530 (RGRA…LVCQ). Over residues 510–524 (GRARRSKGKNKHSKR) the composition is skewed to basic residues.

The protein belongs to the peptidase C19 family. USP17 subfamily.

Its subcellular location is the nucleus. It localises to the endoplasmic reticulum. It catalyses the reaction Thiol-dependent hydrolysis of ester, thioester, amide, peptide and isopeptide bonds formed by the C-terminal Gly of ubiquitin (a 76-residue protein attached to proteins as an intracellular targeting signal).. Its function is as follows. Deubiquitinating enzyme that removes conjugated ubiquitin from specific proteins to regulate different cellular processes that may include cell proliferation, progression through the cell cycle, apoptosis, cell migration, and the cellular response to viral infection. This Homo sapiens (Human) protein is Ubiquitin carboxyl-terminal hydrolase 17-like protein 20 (USP17L20).